The following is a 203-amino-acid chain: E3 ubiquitin-protein ligase rnf152-B (203 aa).

An RING-type zinc finger spans residues 12–55 (CQICFNYYSPRRRPKLLDCKHTCCSVCLQQMRASQKDLRCPWCR). The chain crosses the membrane as a helical span at residues 167–187 (SGVCTVILVACVLVFLLGIVL).

This sequence belongs to the RNF152 family.

Its subcellular location is the lysosome membrane. It carries out the reaction S-ubiquitinyl-[E2 ubiquitin-conjugating enzyme]-L-cysteine + [acceptor protein]-L-lysine = [E2 ubiquitin-conjugating enzyme]-L-cysteine + N(6)-ubiquitinyl-[acceptor protein]-L-lysine.. It participates in protein modification; protein ubiquitination. Functionally, E3 ubiquitin-protein ligase that acts as a negative regulator of mTORC1 signaling by mediating ubiquitination of RagA/RRAGA and RHEB. Catalyzes 'Lys-63'-linked polyubiquitination of RagA/RRAGA in response to amino acid starvation, thereby regulating mTORC1 signaling. Also mediates monoubiquitination of RHEB, promoting its association with the TSC-TBC complex and subsequent inhibition. Also mediates 'Lys-48'-linked polyubiquitination of target proteins and their subsequent targeting to the proteasome for degradation. The polypeptide is E3 ubiquitin-protein ligase rnf152-B (Xenopus laevis (African clawed frog)).